Here is a 218-residue protein sequence, read N- to C-terminus: MRIILLGAPGAGKGTQAQNIMKKFGIPQISTGDMLRAAVKAGSPLGLKVKEVMATGGLVSDETIIALVKDRIKEDDCANGFLFDGFPRTIPQAEALREAGVKIDHVVEIAVDDQEIIKRLSGRRVHEASGRVYHVDYNPPKVEGKDDVTGEPLVQREDDKEETVRKRLEVYHSQTAPLVDYYRSWAEKDADAAPEYLRVEGVGSVDEIRDRVFTGLQK.

10-15 contacts ATP; sequence GAGKGT. Positions 30-59 are NMP; sequence STGDMLRAAVKAGSPLGLKVKEVMATGGLV. AMP-binding positions include Thr-31, Arg-36, 57 to 59, 85 to 88, and Gln-92; these read GLV and GFPR. Residues 122–159 are LID; sequence GRRVHEASGRVYHVDYNPPKVEGKDDVTGEPLVQREDD. ATP contacts are provided by residues Arg-123 and 132-133; that span reads VY. AMP-binding residues include Arg-156 and Arg-167. Residue Gly-203 coordinates ATP.

Belongs to the adenylate kinase family. As to quaternary structure, monomer.

It is found in the cytoplasm. The enzyme catalyses AMP + ATP = 2 ADP. It functions in the pathway purine metabolism; AMP biosynthesis via salvage pathway; AMP from ADP: step 1/1. Functionally, catalyzes the reversible transfer of the terminal phosphate group between ATP and AMP. Plays an important role in cellular energy homeostasis and in adenine nucleotide metabolism. This is Adenylate kinase from Hahella chejuensis (strain KCTC 2396).